The primary structure comprises 245 residues: Bis(5'-nucleosyl)-tetraphosphatase PrpE [asymmetrical] (245 aa).

The protein belongs to the PrpE family. The cofactor is Ni(2+).

The catalysed reaction is P(1),P(4)-bis(5'-guanosyl) tetraphosphate + H2O = GMP + GTP + 2 H(+). In terms of biological role, asymmetrically hydrolyzes Ap4p to yield AMP and ATP. The polypeptide is Bis(5'-nucleosyl)-tetraphosphatase PrpE [asymmetrical] (Geobacillus sp. (strain WCH70)).